A 204-amino-acid chain; its full sequence is Guanylate kinase (204 aa).

The Guanylate kinase-like domain occupies 16-196 (AKVIIFSAPS…AKAHALKVIK (181 aa)). Position 23 to 30 (23 to 30 (APSGSGKS)) interacts with ATP.

This sequence belongs to the guanylate kinase family.

Its subcellular location is the cytoplasm. The enzyme catalyses GMP + ATP = GDP + ADP. In terms of biological role, essential for recycling GMP and indirectly, cGMP. This chain is Guanylate kinase, found in Bacteroides fragilis (strain ATCC 25285 / DSM 2151 / CCUG 4856 / JCM 11019 / LMG 10263 / NCTC 9343 / Onslow / VPI 2553 / EN-2).